A 522-amino-acid chain; its full sequence is E3 ubiquitin-protein ligase DMA2 (522 aa).

Disordered stretches follow at residues 1–56 (MYTP…RPAS) and 69–92 (QNSQ…PSNS). Over residues 14–35 (APTSSMTSNSSSASNANTTSSS) the composition is skewed to low complexity. Residues 36-49 (GINPRNRASGTPSN) are compositionally biased toward polar residues. Ser-206 is subject to Phosphoserine. Glycyl lysine isopeptide (Lys-Gly) (interchain with G-Cter in ubiquitin) cross-links involve residues Lys-211, Lys-256, Lys-258, Lys-288, Lys-310, Lys-333, Lys-343, Lys-346, Lys-366, Lys-406, Lys-412, and Lys-423. An FHA domain is found at 295 to 358 (LVIGRYTERV…SGTFLNHQRL (64 aa)). The segment at 433 to 477 (CSICLCKIKPCQAIFISPCAHSWHFRCVRRLVMLSYPQFVCPNCR) adopts an RING-type; atypical zinc-finger fold.

This sequence belongs to the DMA1 family. Post-translationally, UBC4-dependent autoubiquitination occurs at Lys-211, Lys-258, Lys-288, Lys-310, Lys-333, Lys-343, Lys-346, Lys-366, Lys-406, Lys-412 and Lys-423. UBC13/MMS2-dependent autoubiquitination occurs at Lys-258, Lys-310, Lys-346 and Lys-366. Lys-211, Lys-256, Lys-288, Lys-310, Lys-343, Lys-258, Lys-366 and Lys-412 are also ubiquitinated in trans by DMA1 E3 ligase in association with UBC4.

Its subcellular location is the cytoplasm. The enzyme catalyses S-ubiquitinyl-[E2 ubiquitin-conjugating enzyme]-L-cysteine + [acceptor protein]-L-lysine = [E2 ubiquitin-conjugating enzyme]-L-cysteine + N(6)-ubiquitinyl-[acceptor protein]-L-lysine.. Functionally, E3 ubiquitin-protein ligase which functions in cell cycle retarding in conjunction with the UBC4 and UBC13/MMS2 complex, 2 E2 ubiquitin conjugating enzymes. Involved in nutritional control of the cell cycle. Required for proper spindle positioning, likely regulating septin ring deposition at the bud neck. The chain is E3 ubiquitin-protein ligase DMA2 (DMA2) from Saccharomyces cerevisiae (strain YJM789) (Baker's yeast).